We begin with the raw amino-acid sequence, 314 residues long: Prohormone-3 (314 aa).

The first 19 residues, 1–19 (MGRVLLSASSLLLHIQVFT), serve as a signal peptide directing secretion. Residues 90–112 (YTCVALTVVALVSTMHFGVEAWG) form a helical membrane-spanning segment.

It localises to the membrane. This is Prohormone-3 from Apis mellifera (Honeybee).